The chain runs to 367 residues: Phosphoribosylaminoimidazole-succinocarboxamide synthase (367 aa).

Belongs to the SAICAR synthetase family.

It catalyses the reaction 5-amino-1-(5-phospho-D-ribosyl)imidazole-4-carboxylate + L-aspartate + ATP = (2S)-2-[5-amino-1-(5-phospho-beta-D-ribosyl)imidazole-4-carboxamido]succinate + ADP + phosphate + 2 H(+). It participates in purine metabolism; IMP biosynthesis via de novo pathway; 5-amino-1-(5-phospho-D-ribosyl)imidazole-4-carboxamide from 5-amino-1-(5-phospho-D-ribosyl)imidazole-4-carboxylate: step 1/2. This is Phosphoribosylaminoimidazole-succinocarboxamide synthase from Colwellia psychrerythraea (strain 34H / ATCC BAA-681) (Vibrio psychroerythus).